A 238-amino-acid polypeptide reads, in one-letter code: Major prion protein (238 aa).

Positions 1 to 15 are cleaved as a signal peptide; the sequence is MLVLFVATWSDLGLC. Residues 16–215 are interaction with GRB2, ERI3 and SYN1; sequence KKRPKPGGWN…ESQAYYQRGS (200 aa). The disordered stretch occupies residues 18–93; sequence RPKPGGWNTG…WHKPSKPKTS (76 aa). 4 consecutive repeat copies span residues 44 to 52, 53 to 60, 61 to 68, and 69 to 76. The interval 44-83 is 4 X 8 AA tandem repeats of P-H-G-G-G-W-G-Q; sequence PQGGGGWGQPHGGGWGQPHGGGWGQPHGGGWGQGGGTHNQ. Gly residues predominate over residues 45–80; it reads QGGGGWGQPHGGGWGQPHGGGWGQPHGGGWGQGGGT. Cu(2+) is bound by residues G47, G48, H54, G55, G56, H62, G63, G64, H70, G71, and G72. Positions 83-93 are enriched in basic residues; it reads QWHKPSKPKTS. A disulfide bridge connects residues C164 and C199. N166 and N182 each carry an N-linked (GlcNAc...) asparagine glycan. S215 is lipidated: GPI-anchor amidated serine. Residues 216-238 constitute a propeptide, removed in mature form; it reads SIVLFSSPPVILLISFLIFLIVG.

The protein belongs to the prion family. In terms of assembly, monomer and homodimer. Has a tendency to aggregate into amyloid fibrils containing a cross-beta spine, formed by a steric zipper of superposed beta-strands. Soluble oligomers may represent an intermediate stage on the path to fibril formation. Copper binding may promote oligomerization. Interacts with GRB2, APP, ERI3/PRNPIP and SYN1. Mislocalized cytosolically exposed PrP interacts with MGRN1; this interaction alters MGRN1 subcellular location and causes lysosomal enlargement. Interacts with KIAA1191.

Its subcellular location is the cell membrane. The protein resides in the golgi apparatus. Functionally, its primary physiological function is unclear. Has cytoprotective activity against internal or environmental stresses. May play a role in neuronal development and synaptic plasticity. May be required for neuronal myelin sheath maintenance. May play a role in iron uptake and iron homeostasis. Soluble oligomers are toxic to cultured neuroblastoma cells and induce apoptosis (in vitro). Association with GPC1 (via its heparan sulfate chains) targets PRNP to lipid rafts. Also provides Cu(2+) or Zn(2+) for the ascorbate-mediated GPC1 deaminase degradation of its heparan sulfate side chains. This is Major prion protein (PRNP) from Theropithecus gelada (Gelada baboon).